The following is a 358-amino-acid chain: 4-diphosphocytidyl-2-C-methyl-D-erythritol kinase (358 aa).

The active site involves Lys24. Residue 138-148 (PVAGGMAGGSA) participates in ATP binding. Asp186 is a catalytic residue.

It belongs to the GHMP kinase family. IspE subfamily.

The enzyme catalyses 4-CDP-2-C-methyl-D-erythritol + ATP = 4-CDP-2-C-methyl-D-erythritol 2-phosphate + ADP + H(+). Its pathway is isoprenoid biosynthesis; isopentenyl diphosphate biosynthesis via DXP pathway; isopentenyl diphosphate from 1-deoxy-D-xylulose 5-phosphate: step 3/6. In terms of biological role, catalyzes the phosphorylation of the position 2 hydroxy group of 4-diphosphocytidyl-2C-methyl-D-erythritol. This chain is 4-diphosphocytidyl-2-C-methyl-D-erythritol kinase, found in Corynebacterium jeikeium (strain K411).